We begin with the raw amino-acid sequence, 210 residues long: Calcium-activated potassium channel subunit beta-4 (210 aa).

Topologically, residues 1 to 19 (MAKLRVAYEYTEAEDKSIR) are cytoplasmic. Residues 20 to 40 (LGLFLIISGVVSLFIFGFCWL) traverse the membrane as a helical segment. Residues 41 to 167 (SPALQDLQAT…DVLLHRTHDE (127 aa)) are Extracellular-facing. Residues Asn-53 and Asn-90 are each glycosylated (N-linked (GlcNAc...) asparagine). The chain crosses the membrane as a helical span at residues 168–188 (IVLLHCFLWPLVTFVVGVLIV). At 189–210 (VLTICAKSLAVKAEAMKKRKFS) the chain is on the cytoplasmic side.

Belongs to the KCNMB (TC 8.A.14.1) family. KCNMB4 subfamily. Interacts with KCNMA1 tetramer. There are probably 4 molecules of KCMNB4 per KCNMA1 tetramer. Interacts with FMR1 (via N-terminus). Post-translationally, phosphorylated. Phosphorylation modulates its effect on KCNMA1 activation kinetics. N-glycosylated. A highly glycosylated form is promoted by KCNMA1. Glycosylation, which is not required for the interaction with KCNMA1 and subcellular location, increases protection against charybdotoxin. As to expression, predominantly expressed in brain. In brain, it is expressed in the cerebellum, cerebral cortex, medulla, spinal cord, occipital pole, frontal lobe, temporal lobe, putamen, amygdala, caudate nucleus, corpus callosum, hippocampus, substantia nigra and thalamus. Weakly or not expressed in other tissues.

It localises to the membrane. Regulatory subunit of the calcium activated potassium KCNMA1 (maxiK) channel. Modulates the calcium sensitivity and gating kinetics of KCNMA1, thereby contributing to KCNMA1 channel diversity. Decreases the gating kinetics and calcium sensitivity of the KCNMA1 channel, but with fast deactivation kinetics. May decrease KCNMA1 channel openings at low calcium concentrations but increases channel openings at high calcium concentrations. Makes KCNMA1 channel resistant to 100 nM charybdotoxin (CTX) toxin concentrations. This is Calcium-activated potassium channel subunit beta-4 (KCNMB4) from Homo sapiens (Human).